The sequence spans 1029 residues: mRNA 3'-end-processing protein rna14 (1029 aa).

Disordered regions lie at residues 1 to 177 (MAEE…PDVS) and 225 to 251 (GNVQ…PHDR). Residues 21–32 (VDYKAVEEHGAD) are compositionally biased toward basic and acidic residues. Composition is skewed to polar residues over residues 43 to 79 (KTLQ…NSVQ) and 104 to 119 (TSTM…QPKT). Acidic residues predominate over residues 127–140 (VEDEDEDDAGDADY). A compositionally biased stretch (polar residues) spans 153-175 (TVATNVPQQSVSGNENEASSTPD). Positions 229–243 (DSATATPTPDSPSTS) are enriched in low complexity. 6 HAT repeats span residues 281 to 313 (NRFD…MESE), 315 to 346 (NDLY…YVRR), 357 to 392 (QARR…FIKS), 406 to 439 (QKMD…FEMG), 469 to 509 (ITRD…WEKG), and 521 to 553 (AFKG…FCFL). Disordered regions lie at residues 634-664 (TFAK…ESVK), 853-951 (TAVR…GSPA), and 996-1023 (IPLP…SPSL). Basic and acidic residues predominate over residues 894 to 908 (SPKRPLEDFDDDYNR). 2 stretches are compositionally biased toward polar residues: residues 932-949 (RSQL…SQGS) and 1006-1023 (GTTQ…SPSL).

It is found in the nucleus. It localises to the cytoplasm. In terms of biological role, component of the cleavage factor IA (CFIA) complex, which is involved in the endonucleolytic cleavage during polyadenylation-dependent pre-mRNA 3'-end formation. In Aspergillus fumigatus (strain ATCC MYA-4609 / CBS 101355 / FGSC A1100 / Af293) (Neosartorya fumigata), this protein is mRNA 3'-end-processing protein rna14 (rna14).